A 727-amino-acid chain; its full sequence is Pollen-specific leucine-rich repeat extensin-like protein 3 (727 aa).

The first 22 residues, 1–22, serve as a signal peptide directing secretion; it reads MPHIYKQPLGIFQGFVPTLTDA. The LRR 1 repeat unit spans residues 19–43; sequence LTDAEVSFIAQRQLLTLPENGELPD. Asn80 carries N-linked (GlcNAc...) asparagine glycosylation. 9 LRR repeats span residues 107-131, 132-154, 156-179, 180-202, 203-226, 228-249, 250-273, 275-296, and 297-321; these read VAVV…LGLM, TDVA…SFEK, SLMH…VLSW, PAVK…ELFK, KDLD…LGES, ASVV…IGNM, KNLN…IGKL, NVNV…SFVG, and LTSM…ICKL. A glycan (N-linked (GlcNAc...) asparagine) is linked at Asn326. A disordered region spans residues 381 to 727; it reads SKDKCAGGSS…SPPPPMFQGY (347 aa). Composition is skewed to pro residues over residues 397–419, 446–457, 466–479, 492–677, and 718–727; these read SPSP…PQPN, SPPPASSPPTSP, VHKP…PQPN, SPPP…PKMS, and SPPPPMFQGY. The tract at residues 432–727 is contains the Ser-Pro(4) repeats; that stretch reads SPPPPQQPHH…SPPPPMFQGY (296 aa).

In terms of processing, hydroxylated on proline residues in the S-P-P-P-P repeat. O-glycosylated on hydroxyprolines. Expressed in flowers, stamen, pollen, and pollinated carpels.

Its subcellular location is the secreted. The protein resides in the cell wall. Its function is as follows. Modulates cell morphogenesis by regulating cell wall formation and assembly, and/or growth polarization. This Arabidopsis thaliana (Mouse-ear cress) protein is Pollen-specific leucine-rich repeat extensin-like protein 3 (PEX3).